The primary structure comprises 223 residues: Uracil-DNA glycosylase (223 aa).

Asp61 acts as the Proton acceptor in catalysis.

Belongs to the uracil-DNA glycosylase (UDG) superfamily. UNG family.

It localises to the cytoplasm. The catalysed reaction is Hydrolyzes single-stranded DNA or mismatched double-stranded DNA and polynucleotides, releasing free uracil.. Excises uracil residues from the DNA which can arise as a result of misincorporation of dUMP residues by DNA polymerase or due to deamination of cytosine. This Haemophilus ducreyi (strain 35000HP / ATCC 700724) protein is Uracil-DNA glycosylase.